A 454-amino-acid chain; its full sequence is Prenyltransferase nscD (454 aa).

This sequence belongs to the tryptophan dimethylallyltransferase family.

It participates in secondary metabolite biosynthesis. Functionally, prenyltransferase; part of the gene cluster that mediates the biosynthesis of neosartoricin, a prenylated anthracenone that exhibits T-cell antiproliferative activity, suggestive of a physiological role as an immunosuppressive agent. The non-reducing polyketide synthase nscA probably synthesizes and cyclizes the decaketide backbone. The hydrolase nscB then mediates the product release through hydrolysis followed by spontaneous decarboxylation. The prenyltransferase nscD catalyzes the addition of the dimethylallyl group to the aromatic C5. The FAD-dependent monooxygenase nscC is then responsible for the stereospecific hydroxylation at C2. There is no gene encoding O-acetyltransferase in the nsc gene cluster; thus, the last step of 2-O-acetylation leading to neosartoricin may be catalyzed by an unidentified O-acetyltransferase. The polypeptide is Prenyltransferase nscD (Neosartorya fischeri (strain ATCC 1020 / DSM 3700 / CBS 544.65 / FGSC A1164 / JCM 1740 / NRRL 181 / WB 181) (Aspergillus fischerianus)).